The primary structure comprises 573 residues: Sulfate adenylyltransferase (573 aa).

The tract at residues 1-169 (MANSPHGGVL…LEAVNRLQHY (169 aa)) is N-terminal. Residues 170 to 394 (DFVELRYTPS…LRESHPPRSQ (225 aa)) are catalytic. A sulfate-binding site is contributed by Gln-197. Residues 197–200 (QTRN) and 291–294 (GRDH) contribute to the ATP site. Active-site residues include Thr-198, Arg-199, and Asn-200. Arg-199 provides a ligand contact to sulfate. Ala-295 provides a ligand contact to sulfate. Residue Met-333 coordinates ATP. The interval 395–573 (QGFTIFLTGY…LESQGLLDRF (179 aa)) is allosteric regulation domain; adenylyl-sulfate kinase-like. Residues 434–437 (ETVR), Arg-451, 477–478 (IA), and Arg-515 contribute to the 3'-phosphoadenylyl sulfate site.

This sequence in the N-terminal section; belongs to the sulfate adenylyltransferase family. The protein in the C-terminal section; belongs to the APS kinase family. In terms of assembly, homohexamer. Dimer of trimers.

The protein resides in the cytoplasm. It catalyses the reaction sulfate + ATP + H(+) = adenosine 5'-phosphosulfate + diphosphate. It participates in sulfur metabolism; hydrogen sulfide biosynthesis; sulfite from sulfate: step 1/3. Its activity is regulated as follows. Allosterically inhibited by 3'-phosphoadenosine 5'-phosphosulfate (PAPS). Functionally, catalyzes the first intracellular reaction of sulfate assimilation, forming adenosine-5'-phosphosulfate (APS) from inorganic sulfate and ATP. Plays an important role in sulfate activation as a component of the biosynthesis pathway of sulfur-containing amino acids. The polypeptide is Sulfate adenylyltransferase (Chaetomium globosum (strain ATCC 6205 / CBS 148.51 / DSM 1962 / NBRC 6347 / NRRL 1970) (Soil fungus)).